Consider the following 295-residue polypeptide: Vesicle-associated protein 4-2 (295 aa).

The segment covering 1–10 (MTMTEEKPTS) has biased composition (basic and acidic residues). Residues 1–99 (MTMTEEKPTS…PSPSVSSVAK (99 aa)) are disordered. Residues 31–53 (NAASSAATSPFPSGASSSSTSSH) show a composition bias toward low complexity. Positions 54 to 71 (LHNHHQHHHQHHHQHHHQ) are enriched in basic residues. Residues 83–98 (GQNQHPTPSPSVSSVA) are compositionally biased toward polar residues. One can recognise an MSP domain in the interval 107-229 (RLKLDPSEKL…KEQILRVIFL (123 aa)). The segment covering 249–263 (DAAVEARKKPPEETG) has biased composition (basic and acidic residues). Residues 249-270 (DAAVEARKKPPEETGPKMIGEG) are disordered. Phosphoserine is present on Ser294.

Belongs to the VAMP-associated protein (VAP) (TC 9.B.17) family.

Its function is as follows. May play a role in vesicle trafficking. This Arabidopsis thaliana (Mouse-ear cress) protein is Vesicle-associated protein 4-2 (PVA42).